Consider the following 603-residue polypeptide: Keratin, type II cuticular Hb4 (603 aa).

Residues 1 to 173 are head; sequence MSCRSYRVSS…PNAQRVKRDE (173 aa). The region spanning 173–484 is the IF rod domain; it reads EKEQIKTLNN…RLLEGEEIRI (312 aa). Residues 174-208 form a coil 1A region; it reads KEQIKTLNNKFASFIDKVRFLEQQNKLLETKWSFL. The linker 1 stretch occupies residues 209–218; sequence QEQKCARSNL. The coil 1B stretch occupies residues 219-319; the sequence is EPLFDNYITN…YHEEIEMLQS (101 aa). Residues 320 to 336 form a linker 12 region; it reads HISETSVIVKMDNSRDL. The tract at residues 337–480 is coil 2; sequence NLDGIIAEVK…VTYRRLLEGE (144 aa). Residues 481–603 form a tail region; the sequence is EIRICEGVGP…STTTSRRTRY (123 aa). Residues 579–603 form a disordered region; it reads CSGGRGNRSSSVRFSSTTTSRRTRY.

This sequence belongs to the intermediate filament family. As to quaternary structure, heterotetramer of two type I and two type II keratins. As to expression, in skin, only expressed in the suprabasal cells of tail scale epidermis. Suprabasally expressed in stratified squamous epithelia and also in the posterior unit of the complex filiform papillae of tongue. Expressed in rare anatomical sites in which an orthokeratinized stratum corneum would be too soft and a hard keratinized structure would be too rigid to meet the functional requirement of the respective epithelia.

The protein is Keratin, type II cuticular Hb4 (Krt84) of Mus musculus (Mouse).